The following is a 375-amino-acid chain: Enoyl-[acyl-carrier-protein] reductase [NADH] 1, chloroplastic (375 aa).

A chloroplast-targeting transit peptide spans 1-67; it reads MGASAATGMQ…SSKRSGVAIR (67 aa). NAD(+)-binding positions include G91, Y98, 155 to 156, 202 to 203, and L252; these read DA and SL. Residues Y254 and Y264 each act as proton acceptor in the active site. NAD(+) is bound by residues K272 and 302 to 306; that span reads LGSRA.

It belongs to the short-chain dehydrogenases/reductases (SDR) family. FabI subfamily. In terms of assembly, homotetramer.

The protein resides in the plastid. Its subcellular location is the chloroplast. The catalysed reaction is a 2,3-saturated acyl-[ACP] + NAD(+) = a (2E)-enoyl-[ACP] + NADH + H(+). Its pathway is lipid metabolism; fatty acid biosynthesis. Its function is as follows. Catalyzes the NAD-dependent reduction of a carbon-carbon double bond in an enoyl moiety that is covalently linked to an acyl carrier protein (ACP). Catalyzes the last reduction step in the de novo synthesis cycle of fatty acids. Involved in the elongation cycle of fatty acids which are used in lipid metabolism. Required for normal plant growth. In Oryza sativa subsp. japonica (Rice), this protein is Enoyl-[acyl-carrier-protein] reductase [NADH] 1, chloroplastic.